Reading from the N-terminus, the 318-residue chain is UAP56-interacting factor (318 aa).

The residue at position 1 (Met1) is an N-acetylmethionine. Residues 1–27 (MNRFSTRLMGATATPPPAPPKARSNEN) form a disordered region. Thr14 is subject to Phosphothreonine. Phosphoserine is present on Ser24. A UAP56-binding motif motif is present at residues 27 to 45 (NLDKIDMSLDDIIKLNRKE). Residues Ser61 and Ser118 each carry the phosphoserine modification. Lys140 is covalently cross-linked (Glycyl lysine isopeptide (Lys-Gly) (interchain with G-Cter in SUMO1)). Polar residues predominate over residues 163–180 (LNRKNNIPNNFTRSGNKL). The disordered stretch occupies residues 163 to 183 (LNRKNNIPNNFTRSGNKLSHQ). Residue Lys261 forms a Glycyl lysine isopeptide (Lys-Gly) (interchain with G-Cter in SUMO2) linkage.

This sequence belongs to the UIF family. In terms of assembly, interacts with DDX39B/UAP56 and NXF1; interaction with DDX39B/UAP56 and NXF1 are mutually exclusive. Interacts with SSRP1; required for its recruitment to mRNAs. Interacts with CHTOP.

It localises to the nucleus. It is found in the nucleoplasm. The protein resides in the nucleus speckle. In terms of biological role, required for mRNA export from the nucleus to the cytoplasm. Acts as an adapter that uses the DDX39B/UAP56-NFX1 pathway to ensure efficient mRNA export and delivering to the nuclear pore. Associates with spliced and unspliced mRNAs simultaneously with ALYREF/THOC4. This chain is UAP56-interacting factor (FYTTD1), found in Bos taurus (Bovine).